Here is a 176-residue protein sequence, read N- to C-terminus: Ferritin heavy chain B (176 aa).

The region spanning 7 to 156 is the Ferritin-like diiron domain; that stretch reads QNFNSDCEAA…DYITNLKRLG (150 aa). Positions 24, 59, 62, 104, and 138 each coordinate Fe cation.

It belongs to the ferritin family. As to quaternary structure, oligomer of 24 subunits. There are two types of subunits: L (light) chain and H (heavy) chain. The functional molecule is roughly spherical and contains a central cavity into which the insoluble mineral iron core is deposited.

The protein resides in the cytoplasm. It catalyses the reaction 4 Fe(2+) + O2 + 4 H(+) = 4 Fe(3+) + 2 H2O. Stores iron in a soluble, non-toxic, readily available form. Important for iron homeostasis. Has ferroxidase activity. Iron is taken up in the ferrous form and deposited as ferric hydroxides after oxidation. In Xenopus laevis (African clawed frog), this protein is Ferritin heavy chain B (fth1-b).